We begin with the raw amino-acid sequence, 176 residues long: ATP-dependent protease subunit HslV (176 aa).

Thr-2 is a catalytic residue. The Na(+) site is built by Gly-157, Cys-160, and Thr-163.

This sequence belongs to the peptidase T1B family. HslV subfamily. As to quaternary structure, a double ring-shaped homohexamer of HslV is capped on each side by a ring-shaped HslU homohexamer. The assembly of the HslU/HslV complex is dependent on binding of ATP.

It is found in the cytoplasm. It catalyses the reaction ATP-dependent cleavage of peptide bonds with broad specificity.. Allosterically activated by HslU binding. Protease subunit of a proteasome-like degradation complex believed to be a general protein degrading machinery. This chain is ATP-dependent protease subunit HslV, found in Photorhabdus laumondii subsp. laumondii (strain DSM 15139 / CIP 105565 / TT01) (Photorhabdus luminescens subsp. laumondii).